The following is a 293-amino-acid chain: Taste receptor type 2 member 143 (293 aa).

Residues 1 to 6 (MPSTPT) lie on the Extracellular side of the membrane. The helical transmembrane segment at 7–27 (LIFIIIFYLVSLASMLQNGFM) threads the bilayer. The Cytoplasmic portion of the chain corresponds to 28–55 (MIVLGREWMRNRTLPAADMIVASLASSR). Residues 56–76 (FCLHGIAILANLLASFDFCYQ) form a helical membrane-spanning segment. Topologically, residues 77 to 79 (ANL) are extracellular. A helical membrane pass occupies residues 80–100 (IGILWDFTNTLIFWLTAWLAI). The Cytoplasmic segment spans residues 101 to 127 (FYCVKISSFSHPVLFWLKWRISQLVPR). The helical transmembrane segment at 128–148 (LLVVSLIIGGLSAVISATGNF) threads the bilayer. Residues 149–181 (MANQMTISQGFHGNCTFGHMSLDFYRYYYLYHS) lie on the Extracellular side of the membrane. The N-linked (GlcNAc...) asparagine glycan is linked to Asn162. The chain crosses the membrane as a helical span at residues 182 to 202 (VLMWFTPFFLFLVSVIVLMFS). Over 203–227 (LYQHVEKMRGHRPGPWDLHTQAHTM) the chain is Cytoplasmic. The chain crosses the membrane as a helical span at residues 228–248 (ALKSLTFFFIFYIFFFLALVI). The Extracellular portion of the chain corresponds to 249–264 (SSTKRKSMQSYYWARE). The chain crosses the membrane as a helical span at residues 265–285 (AIIYTGIFLNSIILLFSNPKL). Residues 286–293 (RKALKMRF) lie on the Cytoplasmic side of the membrane.

The protein belongs to the G-protein coupled receptor T2R family.

Its subcellular location is the membrane. Putative taste receptor which may play a role in the perception of bitterness. This Mus musculus (Mouse) protein is Taste receptor type 2 member 143 (Tas2r143).